The primary structure comprises 392 residues: MALLTILRILLWGVVLFMEQRVQMAKPGWPSTALLADDPTLPSILDLAKEAPGKEMKQWPQGYPLRYMLKLYHRSADPHGHPRENRTIGAKMVRLVKPSANTVRPPRGSWHVQTLDFPLASNQVAYELIRATVVYRHQLHLVNYHLSCHVETWVPKCRTKHLPSSKSGSSKPSPMSKAWTEIDITHCIQQKLWNRKGRSVLRLRFMCQQQKGNETREFRWHGMTSLDVAFLLLYFNDTDDRVQGKLLARGQEELTDRESSFLMRSVRQACSIESDASCPSQEHDGSVNNQCSLHPYKVSFHQLGWDHWIIAPRLYTPNYCKGICTRVLPYGLNSPNHAIIQSLVNELVNHSVPQPSCVPYNFLPMSILLIETNGSILYKEYEGMIAQSCTCR.

The signal sequence occupies residues 1 to 25 (MALLTILRILLWGVVLFMEQRVQMA). The propeptide occupies 26–267 (KPGWPSTALL…ESSFLMRSVR (242 aa)). N-linked (GlcNAc...) asparagine glycosylation is found at Asn-85, Asn-213, Asn-236, Asn-349, and Asn-373. Disulfide bonds link Cys-291/Cys-357, Cys-320/Cys-389, and Cys-324/Cys-391.

Belongs to the TGF-beta family. In terms of assembly, homodimer. But, in contrast to other members of this family, cannot be disulfide-linked. In terms of tissue distribution, ovary specific.

The protein localises to the secreted. May be involved in follicular development. Oocyte-specific growth/differentiation factor that stimulates folliculogenesis and granulosa cell (GC) growth. This is Bone morphogenetic protein 15 (Bmp15) from Mus musculus (Mouse).